The sequence spans 183 residues: UPF0398 protein LSL_0930 (183 aa).

The protein belongs to the UPF0398 family.

The protein is UPF0398 protein LSL_0930 of Ligilactobacillus salivarius (strain UCC118) (Lactobacillus salivarius).